Here is a 171-residue protein sequence, read N- to C-terminus: MSVLQVLHIPDERLRIVAEPVKEVNADIQRIVDDMFDTMYAEEGIGLAATQVDIHQRIIVIDVSENRDERLVLINPELLEQSGETGIEEGCLSIPEQRAFVPRAEKVKIRALDRDGKSFELEADGLLAICIQHEMDHLVGKLFIDYLSPMKRQRIRQKVEKLDRMKAKAAG.

Fe cation-binding residues include cysteine 91 and histidine 133. Glutamate 134 is an active-site residue. Histidine 137 lines the Fe cation pocket.

Belongs to the polypeptide deformylase family. Fe(2+) serves as cofactor.

The enzyme catalyses N-terminal N-formyl-L-methionyl-[peptide] + H2O = N-terminal L-methionyl-[peptide] + formate. Functionally, removes the formyl group from the N-terminal Met of newly synthesized proteins. Requires at least a dipeptide for an efficient rate of reaction. N-terminal L-methionine is a prerequisite for activity but the enzyme has broad specificity at other positions. The sequence is that of Peptide deformylase from Cronobacter sakazakii (strain ATCC BAA-894) (Enterobacter sakazakii).